The chain runs to 697 residues: Potassium-transporting ATPase ATP-binding subunit (697 aa).

The next 4 membrane-spanning stretches (helical) occupy residues 55-75 (PIMFVVEIGFIITFILSFLPS), 79-99 (SIPGWFNITVSLILLFTVLFA), 245-265 (LTLIFLIVVVTLPIFTNYLGF), and 271-291 (VLVALLVCLIPTTIGGLLSAI). Asp-324 (4-aspartylphosphate intermediate) is an active-site residue. ATP-binding positions include Asp-361, Glu-365, 393–400 (FKAETRMS), and Lys-412. 2 residues coordinate Mg(2+): Asp-535 and Asp-539. 3 helical membrane passes run 605 to 625 (FAIIPAMFTLAIPQMEALNIM), 633 to 653 (AILSALIFNAVIIPLLIPLAM), and 677 to 697 (GGVIVPFIGIKVIDIIVGLFI).

Belongs to the cation transport ATPase (P-type) (TC 3.A.3) family. Type IA subfamily. In terms of assembly, the system is composed of three essential subunits: KdpA, KdpB and KdpC.

Its subcellular location is the cell membrane. It catalyses the reaction K(+)(out) + ATP + H2O = K(+)(in) + ADP + phosphate + H(+). In terms of biological role, part of the high-affinity ATP-driven potassium transport (or Kdp) system, which catalyzes the hydrolysis of ATP coupled with the electrogenic transport of potassium into the cytoplasm. This subunit is responsible for energy coupling to the transport system and for the release of the potassium ions to the cytoplasm. The chain is Potassium-transporting ATPase ATP-binding subunit from Bacillus cereus (strain G9842).